We begin with the raw amino-acid sequence, 253 residues long: Phycobilisome rod-core linker polypeptide CpcG4 (253 aa).

The region spanning serine 11 to glutamine 191 is the PBS-linker domain.

It belongs to the phycobilisome linker protein family. In terms of assembly, part of the phycobilisome, a hemidiscoidal structure that is composed of two distinct substructures: a core complex and a number of rods radiating from the core.

Its subcellular location is the cellular thylakoid membrane. Functionally, rod-core linker protein required for attachment of phycocyanin to allophycocyanin in cores of phycobilisomes. Linker polypeptides determine the state of aggregation and the location of the disk-shaped phycobiliprotein units within the phycobilisome and modulate their spectroscopic properties in order to mediate a directed and optimal energy transfer. The polypeptide is Phycobilisome rod-core linker polypeptide CpcG4 (Nostoc sp. (strain PCC 7120 / SAG 25.82 / UTEX 2576)).